We begin with the raw amino-acid sequence, 191 residues long: Adenylate kinase (191 aa).

ATP is bound at residue 10–15; the sequence is AAGKGT. Residues 30-59 are NMP; it reads STGDMLRAAIASGSELGQRVKGVLDRGELV. AMP contacts are provided by residues T31, R36, 57 to 59, 85 to 88, and Q92; these read ELV and GFPR. Positions 126-136 are LID; it reads KRFEEQGRPDD. R127 serves as a coordination point for ATP. AMP contacts are provided by R133 and R144. Residue G172 coordinates ATP.

Belongs to the adenylate kinase family. In terms of assembly, monomer.

It is found in the cytoplasm. The catalysed reaction is AMP + ATP = 2 ADP. Its pathway is purine metabolism; AMP biosynthesis via salvage pathway; AMP from ADP: step 1/1. Its function is as follows. Catalyzes the reversible transfer of the terminal phosphate group between ATP and AMP. Plays an important role in cellular energy homeostasis and in adenine nucleotide metabolism. The protein is Adenylate kinase of Caulobacter vibrioides (strain ATCC 19089 / CIP 103742 / CB 15) (Caulobacter crescentus).